The chain runs to 272 residues: MTDDVTNVEQPSTASEQQPQDVPAAEPSAAKKRRANKAKSKATAAAIEQRLGHSFADPSLLTTAFTHVSALKSARRTDSYQRLEFLGDHVLGLIVSDMLYRAFPDADEGELSKRLADLVRKETCADVARSLDLVEGIKLGTVGAGAGAKLRKSVLGDICEAVIGAIYLDGGYEAASDFVRRNWTERMRKPARSLRDPKTVLQEWAQARGLPTPVYREVERTGPHHDPQFRVAVILPGLEPAEGLGGSKRAAEKVAASAMLAREGVGTGGNDG.

A compositionally biased stretch (polar residues) spans 1–20 (MTDDVTNVEQPSTASEQQPQ). Residues 1–38 (MTDDVTNVEQPSTASEQQPQDVPAAEPSAAKKRRANKA) are disordered. One can recognise an RNase III domain in the interval 44 to 171 (AAAIEQRLGH…VIGAIYLDGG (128 aa)). Glu-84 serves as a coordination point for Mg(2+). Asp-88 is a catalytic residue. Mg(2+) is bound by residues Asp-157 and Glu-160. Residue Glu-160 is part of the active site. Positions 196–265 (DPKTVLQEWA…ASAMLAREGV (70 aa)) constitute a DRBM domain.

Belongs to the ribonuclease III family. As to quaternary structure, homodimer. Mg(2+) is required as a cofactor.

It is found in the cytoplasm. It carries out the reaction Endonucleolytic cleavage to 5'-phosphomonoester.. Functionally, digests double-stranded RNA. Involved in the processing of primary rRNA transcript to yield the immediate precursors to the large and small rRNAs (23S and 16S). Processes some mRNAs, and tRNAs when they are encoded in the rRNA operon. Processes pre-crRNA and tracrRNA of type II CRISPR loci if present in the organism. The polypeptide is Ribonuclease 3 (Rhodopseudomonas palustris (strain ATCC BAA-98 / CGA009)).